We begin with the raw amino-acid sequence, 327 residues long: Undecaprenyl-phosphate 4-deoxy-4-formamido-L-arabinose transferase (327 aa).

The Cytoplasmic segment spans residues 1–235 (MFDAAPIKKV…TCLTTTPLRL (235 aa)). The helical transmembrane segment at 236 to 256 (LSLLGSVIAIGGFSLSVLLIV) threads the bilayer. The Periplasmic segment spans residues 257–269 (LRLALGPQWAAEG). The helical transmembrane segment at 270-290 (VFMLFAVLFTFIGAQFIGMGL) threads the bilayer. The Cytoplasmic segment spans residues 291–327 (LGEYIGRIYNDVRARPRYFVQQVIYPESTSFTEESHQ).

Belongs to the glycosyltransferase 2 family.

It is found in the cell inner membrane. The enzyme catalyses UDP-4-deoxy-4-formamido-beta-L-arabinose + di-trans,octa-cis-undecaprenyl phosphate = 4-deoxy-4-formamido-alpha-L-arabinopyranosyl di-trans,octa-cis-undecaprenyl phosphate + UDP. It participates in glycolipid biosynthesis; 4-amino-4-deoxy-alpha-L-arabinose undecaprenyl phosphate biosynthesis; 4-amino-4-deoxy-alpha-L-arabinose undecaprenyl phosphate from UDP-4-deoxy-4-formamido-beta-L-arabinose and undecaprenyl phosphate: step 1/2. The protein operates within bacterial outer membrane biogenesis; lipopolysaccharide biosynthesis. Its function is as follows. Catalyzes the transfer of 4-deoxy-4-formamido-L-arabinose from UDP to undecaprenyl phosphate. The modified arabinose is attached to lipid A and is required for resistance to polymyxin and cationic antimicrobial peptides. This chain is Undecaprenyl-phosphate 4-deoxy-4-formamido-L-arabinose transferase, found in Salmonella newport (strain SL254).